The primary structure comprises 306 residues: Secretory carrier-associated membrane protein 1 (306 aa).

Residues 1–66 form a disordered region; that stretch reads MAGRYDSNPF…LPPEPAAFGA (66 aa). Over 1-141 the chain is Cytoplasmic; that stretch reads MAGRYDSNPF…EIPSHLQRMQ (141 aa). The span at 25 to 36 shows a compositional bias: gly residues; the sequence is KAGGQPSYGGGA. Residues 40–55 show a composition bias toward low complexity; it reads PNPRNVPSVSSNSRLS. The stretch at 72–109 forms a coiled coil; that stretch reads LDSSKDLKNREKELQAREAELNKREKELKRREEAAARA. A run of 4 helical transmembrane segments spans residues 142–162, 174–194, 209–229, and 257–277; these read YVAFASFLGLACCLFWNVIAV, IWLLAIIYFISGVPGAYVLWY, FGLFFLVYLFHILFCVFSAVA, and IFYFVGFGLFCVESLLSIWVI. The Cytoplasmic segment spans residues 278 to 306; the sequence is QQVYMYFRGSGKAAEMKRDATRGAMRAAF.

It belongs to the SCAMP family.

It localises to the cell membrane. The protein localises to the cytoplasmic vesicle. The protein resides in the secretory vesicle membrane. Its function is as follows. Probably involved in membrane trafficking. The protein is Secretory carrier-associated membrane protein 1 (SCAMP1) of Oryza sativa subsp. japonica (Rice).